A 1391-amino-acid polypeptide reads, in one-letter code: DNA-directed RNA polymerase subunit beta' (1391 aa).

Zn(2+) is bound by residues Cys72, Cys74, Cys87, and Cys90. Mg(2+) is bound by residues Asp462, Asp464, and Asp466. The Zn(2+) site is built by Cys816, Cys890, Cys897, and Cys900.

It belongs to the RNA polymerase beta' chain family. In terms of assembly, the RNAP catalytic core consists of 2 alpha, 1 beta, 1 beta' and 1 omega subunit. When a sigma factor is associated with the core the holoenzyme is formed, which can initiate transcription. The cofactor is Mg(2+). Zn(2+) serves as cofactor.

It carries out the reaction RNA(n) + a ribonucleoside 5'-triphosphate = RNA(n+1) + diphosphate. In terms of biological role, DNA-dependent RNA polymerase catalyzes the transcription of DNA into RNA using the four ribonucleoside triphosphates as substrates. The sequence is that of DNA-directed RNA polymerase subunit beta' from Neisseria meningitidis serogroup C / serotype 2a (strain ATCC 700532 / DSM 15464 / FAM18).